A 380-amino-acid polypeptide reads, in one-letter code: Epoxyqueuosine reductase (380 aa).

Residue aspartate 134 is the Proton donor of the active site. Residues 179 to 208 (PPDQPIEDQCGSCTKCIDICPTGALIQGGQ) enclose the 4Fe-4S ferredoxin-type 1 domain. [4Fe-4S] cluster contacts are provided by cysteine 188, cysteine 191, cysteine 194, cysteine 198, cysteine 214, cysteine 240, cysteine 243, and cysteine 247. Residues 226-258 (PEEYRDKIGNRIYGCDTCQTVCPKNKGMDFHNH) enclose the 4Fe-4S ferredoxin-type 2 domain.

It belongs to the QueG family. In terms of assembly, monomer. Requires cob(II)alamin as cofactor. [4Fe-4S] cluster is required as a cofactor.

The protein resides in the cytoplasm. The catalysed reaction is epoxyqueuosine(34) in tRNA + AH2 = queuosine(34) in tRNA + A + H2O. The protein operates within tRNA modification; tRNA-queuosine biosynthesis. In terms of biological role, catalyzes the conversion of epoxyqueuosine (oQ) to queuosine (Q), which is a hypermodified base found in the wobble positions of tRNA(Asp), tRNA(Asn), tRNA(His) and tRNA(Tyr). This Bacillus anthracis protein is Epoxyqueuosine reductase.